Consider the following 1066-residue polypeptide: UPF0182 protein BL1029 (1066 aa).

The tract at residues 12–74 (GNGGDSRRNN…KPASGGSGGS (63 aa)) is disordered. A compositionally biased stretch (low complexity) spans 44 to 61 (NAGPSGSSRPPRGPANPR). 7 consecutive transmembrane segments (helical) span residues 77–97 (SKIL…FFGL), 126–146 (LWVA…WLAI), 179–199 (VAVV…NANW), 235–255 (VLAA…VTHV), 282–302 (LGIW…IGVF), 326–346 (VTFI…IWLM), and 372–392 (VTSI…WPVL). Residues 977–1044 (DSGAAAGDAE…SQSAMKNGDW (68 aa)) form a disordered region. The segment covering 989–998 (SGDQSGSDTN) has biased composition (polar residues). A compositionally biased stretch (low complexity) spans 1003–1016 (GTTDGKSDSGSSSD).

Belongs to the UPF0182 family.

Its subcellular location is the cell membrane. The polypeptide is UPF0182 protein BL1029 (Bifidobacterium longum (strain NCC 2705)).